The chain runs to 313 residues: Olfactory receptor 1f45 (313 aa).

Over 1 to 25 the chain is Extracellular; that stretch reads MSSTNQSSVTEFLLLGLSRQPQQQQ. Asn5 is a glycosylation site (N-linked (GlcNAc...) asparagine). The chain crosses the membrane as a helical span at residues 26-50; sequence LLFLLFLIMYLATVLGNLLIILAIG. At 51–57 the chain is on the cytoplasmic side; sequence TDSRLHT. Residues 58–79 form a helical membrane-spanning segment; it reads PMYFFLSNLSFVDVCFSSTTVP. At 80–100 the chain is on the extracellular side; sequence KVLANHILGSQAISFSGCLTQ. Cys97 and Cys189 form a disulfide bridge. Residues 101 to 120 traverse the membrane as a helical segment; that stretch reads LYFLAVFGNMDNFLLAVMSY. The Cytoplasmic portion of the chain corresponds to 121 to 139; sequence DRFVAICHPLHYTTKMTRQ. A helical membrane pass occupies residues 140–158; it reads LCVLLVVGSWVVANMNCLL. At 159–196 the chain is on the extracellular side; it reads HILLMARLSFCADNMIPHFFCDGTPLLKLSCSDTHLNE. The helical transmembrane segment at 197 to 219 threads the bilayer; it reads LMILTEGAVVMVTPFVCILISYI. Residues 220–236 lie on the Cytoplasmic side of the membrane; sequence HITCAVLRVSSPRGGWK. A helical transmembrane segment spans residues 237–260; it reads SFSTCGSHLAVVCLFYGTVIAVYF. Residues 261–272 are Extracellular-facing; it reads NPSSSHLAGRDM. A helical membrane pass occupies residues 273-292; sequence AAAVMYAVVTPMLNPFIYSL. Residues 293–313 lie on the Cytoplasmic side of the membrane; it reads RNSDMKAALRKVLAMRFPSKQ.

Belongs to the G-protein coupled receptor 1 family. In terms of tissue distribution, olfactory epithelium.

It localises to the cell membrane. Functionally, odorant receptor. The polypeptide is Olfactory receptor 1f45 (Or1f45) (Rattus norvegicus (Rat)).